Here is a 252-residue protein sequence, read N- to C-terminus: Protein UL24 homolog (252 aa).

Positions 211 to 252 (KASKSVLTKTSGENRSRASRQVAKNAPKNRIRRTAKKDAKRQ) are disordered. Residues 212–223 (ASKSVLTKTSGE) show a composition bias toward polar residues. The segment covering 237 to 252 (PKNRIRRTAKKDAKRQ) has biased composition (basic residues).

This sequence belongs to the herpesviridae UL24 family.

Its subcellular location is the virion. It is found in the host cytoplasm. The protein localises to the host nucleus. It localises to the host nucleolus. The protein resides in the host Golgi apparatus. Its function is as follows. May participate in nuclear egress of viral particles. Plays a role in the dispersal of several host nucleolar proteins including NCL/nucleolin and NPM1. Since deletion of host NCL/nucleolin negatively impact on nuclear egress, UL24 supposedly acts on this process through its effect on host nucleoli. This Homo sapiens (Human) protein is Protein UL24 homolog (U49).